A 134-amino-acid polypeptide reads, in one-letter code: Large ribosomal subunit protein uL22 (134 aa).

It belongs to the universal ribosomal protein uL22 family. As to quaternary structure, part of the 50S ribosomal subunit.

In terms of biological role, this protein binds specifically to 23S rRNA; its binding is stimulated by other ribosomal proteins, e.g. L4, L17, and L20. It is important during the early stages of 50S assembly. It makes multiple contacts with different domains of the 23S rRNA in the assembled 50S subunit and ribosome. The globular domain of the protein is located near the polypeptide exit tunnel on the outside of the subunit, while an extended beta-hairpin is found that lines the wall of the exit tunnel in the center of the 70S ribosome. The sequence is that of Large ribosomal subunit protein uL22 from Gluconacetobacter diazotrophicus (strain ATCC 49037 / DSM 5601 / CCUG 37298 / CIP 103539 / LMG 7603 / PAl5).